A 215-amino-acid chain; its full sequence is Cytochrome b6 (215 aa).

A helical membrane pass occupies residues 32-52; the sequence is IFYCLGGVTLICFLVQFATGF. A heme c-binding site is contributed by Cys35. Heme b contacts are provided by His86 and His100. Helical transmembrane passes span 90–110, 116–136, and 186–206; these read ASMM…TGGF, LTWV…VTGY, and AHTF…FLMI. His187 and His202 together coordinate heme b.

It belongs to the cytochrome b family. PetB subfamily. The 4 large subunits of the cytochrome b6-f complex are cytochrome b6, subunit IV (17 kDa polypeptide, PetD), cytochrome f and the Rieske protein, while the 4 small subunits are PetG, PetL, PetM and PetN. The complex functions as a dimer. Requires heme b as cofactor. Heme c is required as a cofactor.

It is found in the cell inner membrane. In terms of biological role, component of the cytochrome b6-f complex, which mediates electron transfer between photosystem II (PSII) and photosystem I (PSI), cyclic electron flow around PSI, and state transitions. This Gloeobacter violaceus (strain ATCC 29082 / PCC 7421) protein is Cytochrome b6.